We begin with the raw amino-acid sequence, 429 residues long: Glutamyl-tRNA reductase (429 aa).

Substrate-binding positions include 49–52, Ser-107, 112–114, and Gln-118; these read TCNR and EPQ. Residue Cys-50 is the Nucleophile of the active site. 187–192 is an NADP(+) binding site; that stretch reads GAGKTI.

The protein belongs to the glutamyl-tRNA reductase family. In terms of assembly, homodimer.

It catalyses the reaction (S)-4-amino-5-oxopentanoate + tRNA(Glu) + NADP(+) = L-glutamyl-tRNA(Glu) + NADPH + H(+). It participates in porphyrin-containing compound metabolism; protoporphyrin-IX biosynthesis; 5-aminolevulinate from L-glutamyl-tRNA(Glu): step 1/2. Its function is as follows. Catalyzes the NADPH-dependent reduction of glutamyl-tRNA(Glu) to glutamate 1-semialdehyde (GSA). In Marinobacter nauticus (strain ATCC 700491 / DSM 11845 / VT8) (Marinobacter aquaeolei), this protein is Glutamyl-tRNA reductase.